The primary structure comprises 491 residues: Ran-binding protein 3-like (491 aa).

One can recognise a RanBD1 domain in the interval 270–441; that stretch reads TFKSVLKFPN…VALRSLAKQG (172 aa). A disordered region spans residues 440–468; the sequence is QGDGGPAESQSDTALPQLNGESCDEDEDE. The segment covering 447 to 459 has biased composition (polar residues); it reads ESQSDTALPQLNG.

As to quaternary structure, interacts with SMAD1, SMAD5 and SMAD8.

It localises to the nucleus. The protein resides in the cytoplasm. In terms of biological role, nuclear export factor for BMP-specific SMAD1/5/8 that plays a critical role in terminating BMP signaling and regulating mesenchymal stem cell differentiation by blocking osteoblast differentiation to promote myogenic differention. Directly recognizes dephosphorylated SMAD1/5/8 and mediates their nuclear export in a Ran-dependent manner. This chain is Ran-binding protein 3-like (Ranbp3l), found in Mus musculus (Mouse).